We begin with the raw amino-acid sequence, 226 residues long: Lipoprotein-releasing system ATP-binding protein LolD (226 aa).

The 221-residue stretch at 6 to 226 (LSVEQVSKSF…QLQQGSLIRI (221 aa)) folds into the ABC transporter domain. Residue 42–49 (GESGCGKS) participates in ATP binding.

The protein belongs to the ABC transporter superfamily. Lipoprotein translocase (TC 3.A.1.125) family. The complex is composed of two ATP-binding proteins (LolD) and two transmembrane proteins (LolC and LolE).

Its subcellular location is the cell inner membrane. Its function is as follows. Part of the ABC transporter complex LolCDE involved in the translocation of mature outer membrane-directed lipoproteins, from the inner membrane to the periplasmic chaperone, LolA. Responsible for the formation of the LolA-lipoprotein complex in an ATP-dependent manner. This Treponema pallidum (strain Nichols) protein is Lipoprotein-releasing system ATP-binding protein LolD.